The primary structure comprises 120 residues: NAD(P)H-quinone oxidoreductase subunit 3, chloroplastic (120 aa).

A run of 3 helical transmembrane segments spans residues 9–29 (IFWA…IISG), 64–84 (MFAL…PWAM), and 88–108 (VLGV…IVGS).

Belongs to the complex I subunit 3 family. As to quaternary structure, NDH is composed of at least 16 different subunits, 5 of which are encoded in the nucleus.

It localises to the plastid. It is found in the chloroplast thylakoid membrane. The catalysed reaction is a plastoquinone + NADH + (n+1) H(+)(in) = a plastoquinol + NAD(+) + n H(+)(out). The enzyme catalyses a plastoquinone + NADPH + (n+1) H(+)(in) = a plastoquinol + NADP(+) + n H(+)(out). Its function is as follows. NDH shuttles electrons from NAD(P)H:plastoquinone, via FMN and iron-sulfur (Fe-S) centers, to quinones in the photosynthetic chain and possibly in a chloroplast respiratory chain. The immediate electron acceptor for the enzyme in this species is believed to be plastoquinone. Couples the redox reaction to proton translocation, and thus conserves the redox energy in a proton gradient. In Lemna minor (Common duckweed), this protein is NAD(P)H-quinone oxidoreductase subunit 3, chloroplastic.